The primary structure comprises 264 residues: General transcription factor IIF subunit 2 (264 aa).

This sequence belongs to the TFIIF beta subunit family. Heterodimer of an alpha and a beta subunit.

The protein resides in the nucleus. Its function is as follows. TFIIF is a general transcription initiation factor that binds to RNA polymerase II and helps to recruit it to the initiation complex in collaboration with TFIIB. This is General transcription factor IIF subunit 2 (gtf2f2) from Xenopus laevis (African clawed frog).